The primary structure comprises 434 residues: 23S rRNA (uracil(1939)-C(5))-methyltransferase RlmD (434 aa).

The region spanning 10-68 (RVTTRQIITVTVNDLDPFGQGVARHQGKALFVSGVLPHEQAEVVLVEDKKQYARAEVKR) is the TRAM domain. [4Fe-4S] cluster-binding residues include Cys81, Cys87, Cys90, and Cys162. Positions 265, 294, 299, 315, 342, and 363 each coordinate S-adenosyl-L-methionine. The active-site Nucleophile is Cys389.

Belongs to the class I-like SAM-binding methyltransferase superfamily. RNA M5U methyltransferase family. RlmD subfamily.

The enzyme catalyses uridine(1939) in 23S rRNA + S-adenosyl-L-methionine = 5-methyluridine(1939) in 23S rRNA + S-adenosyl-L-homocysteine + H(+). Its function is as follows. Catalyzes the formation of 5-methyl-uridine at position 1939 (m5U1939) in 23S rRNA. The protein is 23S rRNA (uracil(1939)-C(5))-methyltransferase RlmD of Klebsiella pneumoniae subsp. pneumoniae (strain ATCC 700721 / MGH 78578).